The chain runs to 444 residues: Zinc protease PqqE (444 aa).

Positions Met1–Ser28 are cleaved as a signal peptide. His78 contacts Zn(2+). Glu81 serves as the catalytic Proton acceptor. Zn(2+)-binding residues include His82 and Glu158.

The protein belongs to the peptidase M16 family. It depends on Zn(2+) as a cofactor.

It is found in the secreted. Can function alone, but full activity requires the presence of the non-peptidase homolog YmxG. Functionally, virulence factor that cleaves the cytoplasmic domain of the human junctional adhesion molecule A (JAM-A), compromising gastric epithelial barrier function and cell-cell adhesion. Cleavage of JAM-A occurs after Ala-285 or, to a lesser extent, before Ala-285. In Helicobacter pylori (strain ATCC 700392 / 26695) (Campylobacter pylori), this protein is Zinc protease PqqE.